The chain runs to 442 residues: DNA topoisomerase 6 subunit A3 (442 aa).

A disordered region spans residues 1–34; the sequence is MSEKKRRGGAGAGAASGSASKKPRVSTAASYAES. The Topo IIA-type catalytic domain occupies 91–224; it reads QDSASVTSRI…LHVVASEKGV (134 aa). Tyr185 functions as the O-(5'-phospho-DNA)-tyrosine intermediate in the catalytic mechanism. Residues Glu271 and Asp323 each coordinate Mg(2+).

It belongs to the TOP6A family. In terms of assembly, homodimer. Heterotetramer of two TOP6A and two TOP6B subunits. Interacts with TOP6B. Requires Mg(2+) as cofactor. Highly expressed in flowers before pollination. Expressed in roots and shoots.

The protein resides in the nucleus. The enzyme catalyses ATP-dependent breakage, passage and rejoining of double-stranded DNA.. In terms of biological role, component of the DNA topoisomerase VI involved in chromatin organization and progression of endoreduplication cycles. Relaxes both positive and negative superturns and exhibits a strong decatenase activity. May be involved in cell proliferation and stress tolerance. This chain is DNA topoisomerase 6 subunit A3, found in Oryza sativa subsp. indica (Rice).